Consider the following 506-residue polypeptide: Putative basic amino acid antiporter YfcC (506 aa).

13 helical membrane-spanning segments follow: residues 19 to 39 (LVII…VPVG), 107 to 127 (GTAV…GIVM), 148 to 168 (ILFI…FGMG), 171 to 191 (AVAF…DSIT), 208 to 228 (WMNP…VLSG), 231 to 251 (LRIV…MVYA), 287 to 307 (WLVL…VIVN), 310 to 330 (FIPE…IIGV), 352 to 372 (MMIA…LVGN), 398 to 418 (AVAA…VTSG), 419 to 439 (SGQA…VGVN), 442 to 462 (VTVL…PTSA), and 485 to 505 (LLGL…LMGY).

It to H.influenzae HI_0594. The protein to B.subtilis YcgA.

The protein resides in the cell inner membrane. Metabolomic profiling of different yfcC over-expression and deletion strains suggests that it may affect the glyoxylate shunt. This is Putative basic amino acid antiporter YfcC (yfcC) from Escherichia coli (strain K12).